A 303-amino-acid chain; its full sequence is Tobamovirus multiplication protein 3 (303 aa).

Residues 1-48 (MRIGGVEVTKFASEMMSSSSSSAVEMLNLKEASNWWSDVNESPIWQDR) are Extracellular-facing. Residues 49–69 (IFHVLAVLYGIVSLVAVIQLV) form a helical membrane-spanning segment. At 70–82 (RIQLRVPEYGWTT) the chain is on the cytoplasmic side. Residues 83–103 (QKVFHFLNFVVNGVRAVVFVF) form a helical membrane-spanning segment. At 104–117 (RRNVQFMQPEILQH) the chain is on the extracellular side. Residues 118–138 (ILLDIPSLAFFTTYALLVLFW) form a helical membrane-spanning segment. Topologically, residues 139–156 (AEIYYQARAVSTDGLRPS) are cytoplasmic. A helical transmembrane segment spans residues 157–177 (FFTINAVVYVVQIALWLVLWW). Residues 178 to 183 (KPVRVM) are Extracellular-facing. Residues 184 to 204 (VILSKMFFAGVSLFAALGFLL) traverse the membrane as a helical segment. Over 205–232 (YGGRLFLMLQRFPVESKGRRKKLQEVGY) the chain is Cytoplasmic. Residues 233–253 (VTTICFTCFLIRCIMMCFAAF) form a helical membrane-spanning segment. The Extracellular portion of the chain corresponds to 254–265 (DEGANLDVLDHP). The helical transmembrane segment at 266–286 (ILNFIYYLLVEILPSSLVLFI) threads the bilayer. Over 287 to 303 (LRKLPPKRGITQYHQIR) the chain is Cytoplasmic.

This sequence belongs to the plant tobamovirus multiplication TOM1 protein family. Constituent of tobamovirus replication complex. Interacts with the helicase domain of tobamovirus-encoded replication proteins.

Its subcellular location is the vacuole membrane. Its function is as follows. Contributes to the intracellular multiplication of tobamoviruses, probably being a membrane anchor promoting the formation of the replication complex. The chain is Tobamovirus multiplication protein 3 (TOM3) from Arabidopsis thaliana (Mouse-ear cress).